A 403-amino-acid polypeptide reads, in one-letter code: Phosphopentomutase (403 aa).

Mn(2+) contacts are provided by aspartate 13, aspartate 298, histidine 303, aspartate 339, histidine 340, and histidine 351.

It belongs to the phosphopentomutase family. Mn(2+) serves as cofactor.

The protein localises to the cytoplasm. It catalyses the reaction 2-deoxy-alpha-D-ribose 1-phosphate = 2-deoxy-D-ribose 5-phosphate. It carries out the reaction alpha-D-ribose 1-phosphate = D-ribose 5-phosphate. Its pathway is carbohydrate degradation; 2-deoxy-D-ribose 1-phosphate degradation; D-glyceraldehyde 3-phosphate and acetaldehyde from 2-deoxy-alpha-D-ribose 1-phosphate: step 1/2. Its function is as follows. Isomerase that catalyzes the conversion of deoxy-ribose 1-phosphate (dRib-1-P) and ribose 1-phosphate (Rib-1-P) to deoxy-ribose 5-phosphate (dRib-5-P) and ribose 5-phosphate (Rib-5-P), respectively. The chain is Phosphopentomutase from Streptococcus pyogenes serotype M5 (strain Manfredo).